The chain runs to 364 residues: Probable tartrate dehydrogenase/decarboxylase TtuC (364 aa).

Mn(2+) contacts are provided by Asp222, Asp246, and Asp250.

The protein belongs to the isocitrate and isopropylmalate dehydrogenases family. It depends on Mg(2+) as a cofactor. The cofactor is Mn(2+). Requires K(+) as cofactor.

The protein resides in the cytoplasm. The enzyme catalyses tartrate + NAD(+) = 2-hydroxy-3-oxosuccinate + NADH + H(+). The catalysed reaction is (2R,3S)-tartrate + NAD(+) = 2-hydroxy-3-oxosuccinate + NADH + H(+). It carries out the reaction (2R,3R)-tartrate + NAD(+) = 2-hydroxy-3-oxosuccinate + NADH + H(+). It catalyses the reaction (2R,3R)-tartrate + H(+) = (R)-glycerate + CO2. The enzyme catalyses (R)-malate + NAD(+) = pyruvate + CO2 + NADH. It functions in the pathway carbohydrate acid metabolism; tartrate degradation; 2-hydroxy-3-oxosuccinate from L-tartrate: step 1/1. It participates in carbohydrate acid metabolism; tartrate degradation; 2-hydroxy-3-oxosuccinate from meso-tartrate: step 1/1. Its pathway is carbohydrate acid metabolism; tartrate degradation; D-glycerate from L-tartrate: step 1/1. Its function is as follows. Has multiple catalytic activities. Apart from catalyzing the oxidation of (+)-tartrate to oxaloglycolate, also converts meso-tartrate to D-glycerate and catalyzes the oxidative decarboxylation of D-malate to pyruvate. The sequence is that of Probable tartrate dehydrogenase/decarboxylase TtuC (ttuC) from Agrobacterium vitis (Rhizobium vitis).